Consider the following 413-residue polypeptide: Histidine--tRNA ligase (413 aa).

This sequence belongs to the class-II aminoacyl-tRNA synthetase family. As to quaternary structure, homodimer.

It is found in the cytoplasm. It catalyses the reaction tRNA(His) + L-histidine + ATP = L-histidyl-tRNA(His) + AMP + diphosphate + H(+). This is Histidine--tRNA ligase from Geobacter sulfurreducens (strain ATCC 51573 / DSM 12127 / PCA).